The following is a 438-amino-acid chain: Aspartate--tRNA(Asp) ligase (438 aa).

Glutamate 170 provides a ligand contact to L-aspartate. The tract at residues 192-195 (QLYK) is aspartate. Arginine 214 lines the L-aspartate pocket. ATP is bound by residues 214–216 (RAE), 222–224 (RHL), and glutamate 361. Residues glutamate 361 and serine 364 each coordinate Mg(2+). L-aspartate is bound by residues serine 364 and arginine 368. 409–412 (GAER) is a binding site for ATP.

It belongs to the class-II aminoacyl-tRNA synthetase family. Type 2 subfamily. In terms of assembly, homodimer. Mg(2+) is required as a cofactor.

Its subcellular location is the cytoplasm. It carries out the reaction tRNA(Asp) + L-aspartate + ATP = L-aspartyl-tRNA(Asp) + AMP + diphosphate. Its function is as follows. Catalyzes the attachment of L-aspartate to tRNA(Asp) in a two-step reaction: L-aspartate is first activated by ATP to form Asp-AMP and then transferred to the acceptor end of tRNA(Asp). Is specific for tRNA(Asp) since it aspartylates tRNA(Asn) 3 orders of magnitude less efficiently than tRNA(Asp). This chain is Aspartate--tRNA(Asp) ligase, found in Thermococcus kodakarensis (strain ATCC BAA-918 / JCM 12380 / KOD1) (Pyrococcus kodakaraensis (strain KOD1)).